The chain runs to 108 residues: MSFSRRPKVTKSDIVDQISLNIRNNNLKLEKKYIRLVIDAFFEELKSNLCSNNVIEFRSFGTFEVRKRRGRLNARNPQTGEYVKVLDHHVAYFRPGKDLKERVWGIKG.

The protein belongs to the bacterial histone-like protein family.

Histone-like DNA-binding protein which is capable of wrapping DNA to stabilize it, and thus to prevent its denaturation under extreme environmental conditions. This is DNA-binding protein HBbu (hbb) from Borrelia andersonii (Borreliella andersonii).